The primary structure comprises 439 residues: Glutamine synthetase (439 aa).

Positions 12 to 93 constitute a GS beta-grasp domain; sequence SKIKFVQLVF…VYGFIYKDNK (82 aa). The 341-residue stretch at 99-439 folds into the GS catalytic domain; that stretch reads PRGILKRALE…EWELERYFFL (341 aa). Residues Glu122 and Glu124 each coordinate Mg(2+). Position 172 (Glu172) interacts with ATP. Glu177 and Glu184 together coordinate Mg(2+). Gly229 contacts L-glutamate. His233 lines the Mg(2+) pocket. Residues 235–237 and Ser237 each bind ATP; that span reads HIS. L-glutamate-binding residues include Arg283, Glu289, and Arg301. ATP-binding residues include Arg301, Arg306, and Lys313. Residue Glu318 participates in Mg(2+) binding. Residue Arg320 participates in L-glutamate binding.

Belongs to the glutamine synthetase family. In terms of assembly, oligomer of 12 subunits arranged in the form of two hexagons. Requires Mg(2+) as cofactor.

The protein resides in the cytoplasm. The catalysed reaction is L-glutamate + NH4(+) + ATP = L-glutamine + ADP + phosphate + H(+). Functionally, probably involved in nitrogen metabolism via ammonium assimilation. Catalyzes the ATP-dependent biosynthesis of glutamine from glutamate and ammonia. This is Glutamine synthetase from Pyrococcus woesei.